A 461-amino-acid chain; its full sequence is Probable tubulin polyglutamylase TTLL9 (461 aa).

The tract at residues 1 to 21 (MSRPKNQNYKGHGLQKGKERE) is disordered. Residues 22 to 402 (QRASIRFKTT…EARLTGREKR (381 aa)) enclose the TTL domain. ATP-binding positions include lysine 149 and 155-156 (QG). An a protein-binding site is contributed by glutamine 155. Residues 182–208 (SLEAQPARNTVNPSGSHDTRSSDDQKD) are disordered. A compositionally biased stretch (polar residues) spans 188–197 (ARNTVNPSGS). Residues 198 to 208 (HDTRSSDDQKD) are compositionally biased toward basic and acidic residues. ATP contacts are provided by residues 218–221 (QRYI) and 231–233 (KFD). Position 257 (arginine 257) interacts with L-glutamate. An ATP-binding site is contributed by 276–277 (TN). Lysine 294 is a binding site for L-glutamate. 3 residues coordinate Mg(2+): aspartate 348, glutamate 361, and asparagine 363. Position 379 (lysine 379) interacts with L-glutamate.

It belongs to the tubulin--tyrosine ligase family. It depends on Mg(2+) as a cofactor.

It localises to the cytoplasm. Its subcellular location is the cytoskeleton. It is found in the cilium basal body. The protein localises to the flagellum axoneme. It carries out the reaction (L-glutamyl)(n)-gamma-L-glutamyl-L-glutamyl-[protein] + L-glutamate + ATP = (L-glutamyl)(n+1)-gamma-L-glutamyl-L-glutamyl-[protein] + ADP + phosphate + H(+). Its function is as follows. Probable tubulin polyglutamylase that generates side chains of glutamate on the gamma-carboxyl group of specific glutamate residues within the C-terminal tail of target proteins. Similar to TTLL1, may acquire enzymatic activity only in complex with other proteins as it is most likely lacking domains important for autonomous activity. Mediates tubulin polyglutamylation which induces establishment of microtubule heterogeneity in sperm flagella, thereby playing a role in normal motile flagella axoneme structure and sperm flagella beating pattern. This chain is Probable tubulin polyglutamylase TTLL9 (TTLL9), found in Bos taurus (Bovine).